A 317-amino-acid polypeptide reads, in one-letter code: Probable transcription factor At5g61620 (317 aa).

The segment at 12–25 adopts a CCHC-type zinc-finger fold; sequence CSHCGHNGHNARTC. The segment at 77-111 is disordered; it reads DPIAAVDDTGYHSDGQIHSKKGKTAHEKKKGKPWT. A compositionally biased stretch (basic residues) spans 94–108; it reads HSKKGKTAHEKKKGK. An HTH myb-type domain is found at 102 to 158; that stretch reads HEKKKGKPWTEEEHRNFLIGLNKLGKGDWRGIAKSFVSTRTPTQVASHAQKYFIRLN. Positions 130-154 form a DNA-binding region, H-T-H motif; that stretch reads WRGIAKSFVSTRTPTQVASHAQKYF. The segment at 173 to 206 is disordered; sequence SLEDQKEKERNSQDASTKTPPKQPITGIQQPVVQ. Over residues 175-184 the composition is skewed to basic and acidic residues; that stretch reads EDQKEKERNS. Positions 185 to 206 are enriched in polar residues; it reads QDASTKTPPKQPITGIQQPVVQ.

The protein resides in the nucleus. Its function is as follows. Probable transcription factor involved in somatic embryogenesis. Acts as a positive regulator of BHLH109. This is Probable transcription factor At5g61620 from Arabidopsis thaliana (Mouse-ear cress).